We begin with the raw amino-acid sequence, 433 residues long: MRVVILGSGVVGVASAWYLAQAGHEVTVIDRQPAPALETSAGNAGQISPGYAAPWAAPGVPLKAVKWMFQRHAPLAIRLDGSRYQLEWMWQMLRNCDMRHYQQNKSRMVRIAEYSRDCLKALREQTGIAYEGRQGGTLQLFRTAQQFESAAKDIAVLREAGVPYQLLEAAQLIEAEPALAASQHKLSGGLRLPNDETGDCQLFTQRLAEMAMAAGVHFRFNTPVDALLQDANQICGVQCGSERVTADAYVVALGSFSTELLNHIVKIPVYPLKGYSLTIPITDEKAAPLSTVLDETYKVAITRFDNRIRVGGMAEIVGFNTQLLPARRKTLEMVVRDLYPHGGDIGRATFWSGLRPMTPDGTPVVGRTPLKNLYLNTGHGTLGWTMACGSGQLLADIISGRTPAISADDLSVIRYLPGFYPAPVRALHGVNVG.

3-17 (VVILGSGVVGVASAW) provides a ligand contact to FAD.

It belongs to the DadA oxidoreductase family. It depends on FAD as a cofactor.

It carries out the reaction a D-alpha-amino acid + A + H2O = a 2-oxocarboxylate + AH2 + NH4(+). It participates in amino-acid degradation; D-alanine degradation; NH(3) and pyruvate from D-alanine: step 1/1. Its function is as follows. Oxidative deamination of D-amino acids. The polypeptide is D-amino acid dehydrogenase (Erwinia tasmaniensis (strain DSM 17950 / CFBP 7177 / CIP 109463 / NCPPB 4357 / Et1/99)).